The chain runs to 97 residues: uncharacterized protein (97 aa).

The next 3 helical transmembrane spans lie at 5-25, 27-47, and 77-97; these read TLVA…SLSV, MVFV…LICY, and IISI…VFIL.

The protein localises to the membrane. This is an uncharacterized protein from Saccharomyces cerevisiae (strain ATCC 204508 / S288c) (Baker's yeast).